We begin with the raw amino-acid sequence, 953 residues long: Pyruvate, phosphate dikinase, chloroplastic (953 aa).

The transit peptide at 1-77 (MMSSLSVEGM…VLNPVSPPVT (77 aa)) directs the protein to the chloroplast. The disordered stretch occupies residues 55–74 (PELRSSGLTPPRAVLNPVSP). At Thr-533 the chain carries Phosphothreonine; by PDRP1. His-535 acts as the Tele-phosphohistidine intermediate in catalysis. Arg-641, Arg-698, Glu-827, Gly-848, Thr-849, Asn-850, and Asp-851 together coordinate substrate. Glu-827 is a Mg(2+) binding site. A Mg(2+)-binding site is contributed by Asp-851. Residue Cys-913 is the Proton donor of the active site.

It belongs to the PEP-utilizing enzyme family. Homotetramer. Mg(2+) serves as cofactor. Post-translationally, phosphorylation of Thr-533 in the dark inactivates the enzyme. Dephosphorylation upon light stimulation reactivates the enzyme.

It localises to the plastid. The protein resides in the chloroplast. The catalysed reaction is pyruvate + phosphate + ATP = phosphoenolpyruvate + AMP + diphosphate + H(+). It functions in the pathway photosynthesis; C4 acid pathway. Its activity is regulated as follows. Activated by light-induced dephosphorylation. Inhibited by dark-induced phosphorylation. Both reactions are catalyzed by PDRP1. Inactivated by cold due to the dissociation of the homotetramer. Functionally, formation of phosphoenolpyruvate, which is the primary acceptor of CO(2) in C4 and some Crassulacean acid metabolism plants. This Flaveria bidentis (Coastal plain yellowtops) protein is Pyruvate, phosphate dikinase, chloroplastic.